Consider the following 151-residue polypeptide: Probable ubiquitin-conjugating enzyme E2 W-A (151 aa).

A UBC core domain is found at 3–151 (SMQKRLQKEL…TKWWYHDDTC (149 aa)). Cysteine 91 (glycyl thioester intermediate) is an active-site residue.

Belongs to the ubiquitin-conjugating enzyme family.

Its subcellular location is the nucleus. The enzyme catalyses S-ubiquitinyl-[E1 ubiquitin-activating enzyme]-L-cysteine + [E2 ubiquitin-conjugating enzyme]-L-cysteine = [E1 ubiquitin-activating enzyme]-L-cysteine + S-ubiquitinyl-[E2 ubiquitin-conjugating enzyme]-L-cysteine.. It catalyses the reaction S-ubiquitinyl-[E1 ubiquitin-activating enzyme]-L-cysteine + [acceptor protein]-N-terminal-amino acid = [E1 ubiquitin-activating enzyme]-L-cysteine + N-terminal-ubiquitinyl-[acceptor protein].. The protein operates within protein modification; protein ubiquitination. In terms of biological role, accepts ubiquitin from the E1 complex and catalyzes its covalent attachment to other proteins. Catalyzes monoubiquitination. Involved in degradation of misfolded chaperone substrate and DNA repair. This Danio rerio (Zebrafish) protein is Probable ubiquitin-conjugating enzyme E2 W-A (ube2wa).